Here is a 381-residue protein sequence, read N- to C-terminus: Arrestin-C (381 aa).

The protein belongs to the arrestin family. As to quaternary structure, homodimer; disulfide-linked in response to retinal illumination. Interacts with CXCR4; the interaction is dependent on the C-terminal phosphorylation of CXCR4 and modulates the calcium ion mobilization activity of CXCR4. Interacts with GPR84. In terms of tissue distribution, inner and outer segments, and the inner plexiform regions of the retina.

Its subcellular location is the photoreceptor inner segment. The protein resides in the cell projection. The protein localises to the cilium. It localises to the photoreceptor outer segment. Its function is as follows. May play a role in an as yet undefined retina-specific signal transduction. Could bind to photoactivated-phosphorylated red/green opsins. In Mus musculus (Mouse), this protein is Arrestin-C (Arr3).